Consider the following 931-residue polypeptide: Netrin receptor UNC5C (931 aa).

An N-terminal signal peptide occupies residues 1 to 40 (MRKGLRATAARCGLGLGYLLQMLVLPALALLSASGTGSAA). Residues 41 to 380 (QDDDFFHELP…APDSDDVALY (340 aa)) are Extracellular-facing. The Ig-like domain occupies 62–159 (PHFLIEPEEA…AGTTKSRKAY (98 aa)). 9 disulfides stabilise this stretch: cysteine 83-cysteine 144, cysteine 95-cysteine 142, cysteine 188-cysteine 239, cysteine 272-cysteine 309, cysteine 276-cysteine 313, cysteine 287-cysteine 299, cysteine 328-cysteine 362, cysteine 332-cysteine 367, and cysteine 340-cysteine 352. Positions 161–256 (RIAYLRKTFE…KRKSTTATVI (96 aa)) constitute an Ig-like C2-type domain. Residue asparagine 236 is glycosylated (N-linked (GlcNAc...) asparagine). TSP type-1 domains follow at residues 260–314 (NGGW…TLCP) and 316–368 (DGRW…GLCM). The N-linked (GlcNAc...) asparagine glycan is linked to asparagine 361. The chain crosses the membrane as a helical span at residues 381–401 (VGIVIAVTVCLAITVVVALFV). Residues 402-931 (YRKNHRDFES…VVSLAAEGQY (530 aa)) are Cytoplasmic-facing. A required for netrin-mediated axon repulsion of neuronal growth cones region spans residues 402-931 (YRKNHRDFES…VVSLAAEGQY (530 aa)). Residue serine 502 is modified to Phosphoserine. The 144-residue stretch at 530–673 (CTAFGTFNSL…LSTYALVGQS (144 aa)) folds into the ZU5 domain. At tyrosine 568 the chain carries Phosphotyrosine. An interaction with DCC region spans residues 694 to 712 (SLEYSIRVYCLDDTQDALK). Positions 850 to 929 (QKLCSSLDAP…ETVVSLAAEG (80 aa)) constitute a Death domain.

This sequence belongs to the unc-5 family. Interacts with DCC (via cytoplasmic domain). Interacts (tyrosine phosphorylated form) with PTPN11. Interacts (via extracellular domain) with FLRT3 (via extracellular domain). Interacts (via Ig-like C2-type domain) with DSCAM (via extracellular domain). Interacts (via death domain) with DAPK1. Interacts (via cytoplasmic domain) with TUBB3; this interaction is decreased by NTN1/Netrin-1. Proteolytically cleaved by caspases during apoptosis. The cleavage does not take place when the receptor is associated with netrin ligand. Its cleavage by caspases is required to induce apoptosis. Post-translationally, phosphorylated on different cytoplasmic tyrosine residues. Phosphorylation of Tyr-568 leads to an interaction with PTPN11 phosphatase, suggesting that its activity is regulated by phosphorylation/dephosphorylation. Tyrosine phosphorylation is netrin-dependent. Detected in brain (at protein level). Mainly expressed in brain. Also expressed in kidney. Not expressed in developing or adult lung.

The protein localises to the cell membrane. It is found in the cell surface. The protein resides in the synapse. It localises to the synaptosome. Its subcellular location is the cell projection. The protein localises to the axon. It is found in the dendrite. The protein resides in the growth cone. It localises to the lamellipodium. Its subcellular location is the filopodium. Its function is as follows. Receptor for netrin required for axon guidance. Mediates axon repulsion of neuronal growth cones in the developing nervous system upon ligand binding. NTN1/Netrin-1 binding might cause dissociation of UNC5C from polymerized TUBB3 in microtubules and thereby lead to increased microtubule dynamics and axon repulsion. Axon repulsion in growth cones may also be caused by its association with DCC that may trigger signaling for repulsion. Might also collaborate with DSCAM in NTN1-mediated axon repulsion independently of DCC. Also involved in corticospinal tract axon guidance independently of DCC. Involved in dorsal root ganglion axon projection towards the spinal cord. It also acts as a dependence receptor required for apoptosis induction when not associated with netrin ligand. The protein is Netrin receptor UNC5C (Unc5c) of Rattus norvegicus (Rat).